The chain runs to 73 residues: uncharacterized protein (73 aa).

The first 23 residues, 1 to 23 (MLHLIKMVSKIVLLITLVFIVSA), serve as a signal peptide directing secretion.

This is an uncharacterized protein from Acheta domesticus (House cricket).